The following is a 63-amino-acid chain: Large ribosomal subunit protein uL29 (63 aa).

The protein belongs to the universal ribosomal protein uL29 family.

The sequence is that of Large ribosomal subunit protein uL29 from Shewanella denitrificans (strain OS217 / ATCC BAA-1090 / DSM 15013).